A 304-amino-acid polypeptide reads, in one-letter code: RNA polymerase II holoenzyme cyclin-like subunit (304 aa).

Residues threonine 43 to isoleucine 174 enclose the Cyclin N-terminal domain.

Belongs to the cyclin family. Cyclin C subfamily. Component of the SRB8-11 complex, a regulatory module of the Mediator complex.

It is found in the nucleus. In terms of biological role, component of the SRB8-11 complex. The SRB8-11 complex is a regulatory module of the Mediator complex which is itself involved in regulation of basal and activated RNA polymerase II-dependent transcription. The SRB8-11 complex may be involved in the transcriptional repression of a subset of genes regulated by Mediator. It may inhibit the association of the Mediator complex with RNA polymerase II to form the holoenzyme complex. The SRB8-11 complex phosphorylates the C-terminal domain (CTD) of the largest subunit of RNA polymerase II. The polypeptide is RNA polymerase II holoenzyme cyclin-like subunit (SSN8) (Kluyveromyces lactis (strain ATCC 8585 / CBS 2359 / DSM 70799 / NBRC 1267 / NRRL Y-1140 / WM37) (Yeast)).